We begin with the raw amino-acid sequence, 37 residues long: Turripeptide Lol6.2 (37 aa).

3 cysteine pairs are disulfide-bonded: C4–C16, C8–C21, and C15–C29.

As to expression, expressed by the venom duct.

The protein localises to the secreted. Functionally, acts as a neurotoxin by inhibiting an ion channel. The polypeptide is Turripeptide Lol6.2 (Iotyrris olangoensis (Sea snail)).